Consider the following 152-residue polypeptide: Dehydratase aurZ (152 aa).

The region spanning 34–129 is the EthD domain; sequence PSLSEKEYRH…APDHVNFADT (96 aa).

The protein belongs to the tpcK family.

The enzyme catalyses naphtopyrone YWA1 = norrubrofusarin + H2O + H(+). Its pathway is pigment biosynthesis. Its function is as follows. Dehydratase; part of the gene cluster that mediates the biosynthesis of aurofusarin, a red mycelium pigment which is acting as a mycotoxin. The first step is performed by the polyketide synthase which condenses one acetyl-CoA and 6 malonyl-CoA units to form the first intermediate, the cyclic heptaketide and yellow pigment YWA1. The C2 hydroxyl group in the pyrone ring of YWA1 is probably formed during ring closure by an aldol-type cyclization reaction. The dehydratase aurZ then acts as the first tailoring enzyme in the aurofusarin biosynthetic pathway by converting YWA1 to nor-rubrofusarin. Nor-rubrofusarin is then methylated to rubrofusarin by the O-methyltransferase aurJ. Rubrofusarin is then transported across the plasma membrane by the rubrofusarin-specific pump aurT for further enzymatic processing by the extracellular complex composed of GIP1, aurF, aurO and aurS to yield aurofusarin. The protein is Dehydratase aurZ of Gibberella zeae (strain ATCC MYA-4620 / CBS 123657 / FGSC 9075 / NRRL 31084 / PH-1) (Wheat head blight fungus).